The sequence spans 269 residues: 4-hydroxy-tetrahydrodipicolinate reductase (269 aa).

Residues Gly9–Met14 and Glu35 each bind NAD(+). Arg36 contacts NADP(+). NAD(+) contacts are provided by residues Gly98–Thr100 and Ala122–Tyr125. His155 acts as the Proton donor/acceptor in catalysis. His156 provides a ligand contact to (S)-2,3,4,5-tetrahydrodipicolinate. Lys159 acts as the Proton donor in catalysis. Residue Gly165–Thr166 participates in (S)-2,3,4,5-tetrahydrodipicolinate binding.

This sequence belongs to the DapB family.

Its subcellular location is the cytoplasm. It carries out the reaction (S)-2,3,4,5-tetrahydrodipicolinate + NAD(+) + H2O = (2S,4S)-4-hydroxy-2,3,4,5-tetrahydrodipicolinate + NADH + H(+). The enzyme catalyses (S)-2,3,4,5-tetrahydrodipicolinate + NADP(+) + H2O = (2S,4S)-4-hydroxy-2,3,4,5-tetrahydrodipicolinate + NADPH + H(+). Its pathway is amino-acid biosynthesis; L-lysine biosynthesis via DAP pathway; (S)-tetrahydrodipicolinate from L-aspartate: step 4/4. In terms of biological role, catalyzes the conversion of 4-hydroxy-tetrahydrodipicolinate (HTPA) to tetrahydrodipicolinate. In Actinobacillus pleuropneumoniae serotype 7 (strain AP76), this protein is 4-hydroxy-tetrahydrodipicolinate reductase.